The sequence spans 229 residues: 7-cyano-7-deazaguanine synthase (229 aa).

8-18 contacts ATP; the sequence is FSGGQDSTTCL. Zn(2+)-binding residues include C186, C195, C198, and C201.

It belongs to the QueC family. Requires Zn(2+) as cofactor.

It catalyses the reaction 7-carboxy-7-deazaguanine + NH4(+) + ATP = 7-cyano-7-deazaguanine + ADP + phosphate + H2O + H(+). It participates in purine metabolism; 7-cyano-7-deazaguanine biosynthesis. Its function is as follows. Catalyzes the ATP-dependent conversion of 7-carboxy-7-deazaguanine (CDG) to 7-cyano-7-deazaguanine (preQ(0)). This is 7-cyano-7-deazaguanine synthase from Edwardsiella ictaluri (strain 93-146).